Consider the following 297-residue polypeptide: uncharacterized protein (297 aa).

This sequence belongs to the glycosyltransferase 2 family.

This is an uncharacterized protein from Mycoplasma genitalium (strain ATCC 33530 / DSM 19775 / NCTC 10195 / G37) (Mycoplasmoides genitalium).